The primary structure comprises 120 residues: Large ribosomal subunit protein bL17 (120 aa).

The protein belongs to the bacterial ribosomal protein bL17 family. Part of the 50S ribosomal subunit. Contacts protein L32.

This chain is Large ribosomal subunit protein bL17, found in Bacillus velezensis (strain DSM 23117 / BGSC 10A6 / LMG 26770 / FZB42) (Bacillus amyloliquefaciens subsp. plantarum).